A 120-amino-acid polypeptide reads, in one-letter code: uncharacterized protein (120 aa).

To M.jannaschii MJ0361.

This is an uncharacterized protein from Methanocaldococcus jannaschii (strain ATCC 43067 / DSM 2661 / JAL-1 / JCM 10045 / NBRC 100440) (Methanococcus jannaschii).